The primary structure comprises 954 residues: MENISNKPLSAIISEVADRYWQRINDVFPELANELTKEQGEELYRIMGLSDFIADQLCRHPQWILSLFNGELNNLSRSEFDKDLHGLLSECQSEDEANRVLRCYRNKQMVRLAWRDFLGYASLENSLLDLSALAEALIISARDWLYIQACKQYGTPMDSEGNPQPLIILGMGKLGGRELNFSSDIDLIFTFPEHGETQGGRRAIENQQFFIRMGQRLVNMLHQVTVDGFVYRVDMRLRPYGESGPLVVSFSGLEDYYQEQGRDWERYAMVKARALGPWTAFSDELHSMLRPFVYRRYIDFSAIESLRKMKQLITQEVRRRQLTDNIKLGAGGIREVEFVVQSFQLIRGGREPSLRQQSLFAAIDTLYQLGQLEYLAVDELKQSYLLLRRVENLLQGIGDQQTQTLPDSGLNWYRLCHCMGMASEAELRTHIESAMSKIHRHFIETVGGRTQDEGADLWTQQLWIAYEDDDAQTLIKEQMIDDPELWPQLKSWRETVANRSIGPRGRDTLDKLMPWLLREFTNLPTPSDALNSVSKVIDQILTRTTYLELLYENPGARQQLVSLCCASPWIAAQLAKFPMLLDELIDPTQLYDTTSLDDYGSELRQYLLRVPEEDMEQQMEALRQFKLSQQLKIAAADVTGVLPVSQVSDHLTLLSEAIIEQVVMQAWQQVTARHGVPAYLEEGVTGFAVIGYGKAGGIELGYGSDLDLVFLHSFSREKYPDQGETDGDRPIEVGHFYLKLAQRILHLFSTRTTSGELYEVDMRLRPSGASGLLVSEIEYFGEYQREEAWTWEHQALVRARFMFGSNGLSSRFSELRSEVLQLARDGSDLAKAVRDMRTKMRDHLLKVKTGHFDLKQSAGGIADIEFIAQYLVLANANQHNELSFWSDNIRIFTGLGELGILAHADVESLIQAYLFLRDESHRQTLQQKPGELPLDLVAEHANRVMDIYQRILVD.

Residues 1–450 (MENISNKPLS…HFIETVGGRT (450 aa)) form an adenylyl removase region. Residues 454-954 (GADLWTQQLW…MDIYQRILVD (501 aa)) are adenylyl transferase.

The protein belongs to the GlnE family. Requires Mg(2+) as cofactor.

It catalyses the reaction [glutamine synthetase]-O(4)-(5'-adenylyl)-L-tyrosine + phosphate = [glutamine synthetase]-L-tyrosine + ADP. The catalysed reaction is [glutamine synthetase]-L-tyrosine + ATP = [glutamine synthetase]-O(4)-(5'-adenylyl)-L-tyrosine + diphosphate. Its function is as follows. Involved in the regulation of glutamine synthetase GlnA, a key enzyme in the process to assimilate ammonia. When cellular nitrogen levels are high, the C-terminal adenylyl transferase (AT) inactivates GlnA by covalent transfer of an adenylyl group from ATP to specific tyrosine residue of GlnA, thus reducing its activity. Conversely, when nitrogen levels are low, the N-terminal adenylyl removase (AR) activates GlnA by removing the adenylyl group by phosphorolysis, increasing its activity. The regulatory region of GlnE binds the signal transduction protein PII (GlnB) which indicates the nitrogen status of the cell. In Shewanella woodyi (strain ATCC 51908 / MS32), this protein is Bifunctional glutamine synthetase adenylyltransferase/adenylyl-removing enzyme.